The primary structure comprises 154 residues: Heat shock protein beta-3 (154 aa).

The segment at 48 to 71 is disordered; it reads ARGAGTPQALAEDSASTEKPPGEG. The region spanning 57 to 154 is the sHSP domain; sequence LAEDSASTEK…VEVKDSLGTK (98 aa).

Belongs to the small heat shock protein (HSP20) family.

The protein localises to the cytoplasm. The protein resides in the nucleus. In terms of biological role, inhibitor of actin polymerization. The polypeptide is Heat shock protein beta-3 (Hspb3) (Mus musculus (Mouse)).